A 557-amino-acid polypeptide reads, in one-letter code: Aerobic glycerol-3-phosphate dehydrogenase (557 aa).

21 to 49 contacts FAD; that stretch reads DVVIIGGGITGAGIALDASQRGMKVALVE.

Belongs to the FAD-dependent glycerol-3-phosphate dehydrogenase family. It depends on FAD as a cofactor.

It localises to the cytoplasm. The enzyme catalyses a quinone + sn-glycerol 3-phosphate = dihydroxyacetone phosphate + a quinol. It participates in polyol metabolism; glycerol degradation via glycerol kinase pathway; glycerone phosphate from sn-glycerol 3-phosphate (aerobic route): step 1/1. The sequence is that of Aerobic glycerol-3-phosphate dehydrogenase (glpD) from Staphylococcus haemolyticus (strain JCSC1435).